A 224-amino-acid polypeptide reads, in one-letter code: MERRICIAIDGPAAAGKSTVAKLIANRLSYVYIDTGAMYRALTYRALQCGVDIHDEQALLSLLGDTSIELKPSPQGQLVFVNGEDVTDIIRGEAVTNAVSFVAKHPLVREEMVARQRALAEGGGVVMDGRDIGTNVLPNAEVKIFLKASVEERARRRHEENIARGFPSDLEKLKEEIAHRDRIDSERETAPLRKAPDAVEIDTTSLTVEEVAARIMEIVNERIG.

Residue Gly-11–Thr-19 coordinates ATP.

It belongs to the cytidylate kinase family. Type 1 subfamily.

It is found in the cytoplasm. It carries out the reaction CMP + ATP = CDP + ADP. The catalysed reaction is dCMP + ATP = dCDP + ADP. The protein is Cytidylate kinase of Geobacillus thermodenitrificans (strain NG80-2).